The following is a 433-amino-acid chain: Protein slt1 (433 aa).

Disordered regions lie at residues 159–184 (SPEE…SEYA), 200–234 (NAPE…EELS), and 252–433 (SNKR…DEDA). Polar residues-rich tracts occupy residues 172-184 (DQQT…SEYA) and 215-228 (TLPN…QASV). Phosphoserine is present on residues Ser227, Ser229, and Ser269. Residues 343 to 353 (IDTKAGEKLTD) show a composition bias toward basic and acidic residues. The span at 385–421 (EGSNNHEQGSFNEPKSNVDSNDSASPKRPSSQASLRH) shows a compositional bias: polar residues. Phosphoserine occurs at positions 409, 415, and 418.

This Schizosaccharomyces pombe (strain 972 / ATCC 24843) (Fission yeast) protein is Protein slt1 (slt1).